The primary structure comprises 1071 residues: ATP-dependent helicase/deoxyribonuclease subunit B (1071 aa).

This sequence belongs to the helicase family. AddB/RexB type 2 subfamily. Heterodimer of AddA and RexB. Requires Mg(2+) as cofactor.

In terms of biological role, the heterodimer acts as both an ATP-dependent DNA helicase and an ATP-dependent, dual-direction single-stranded exonuclease. Recognizes the chi site generating a DNA molecule suitable for the initiation of homologous recombination. This subunit has 5' -&gt; 3' nuclease activity but not helicase activity. The polypeptide is ATP-dependent helicase/deoxyribonuclease subunit B (Streptococcus pyogenes serotype M1).